Reading from the N-terminus, the 308-residue chain is Vomeronasal type-1 receptor 92 (308 aa).

The Extracellular portion of the chain corresponds to 1 to 18; it reads MNKDNTLHTIMKITMFSE. A helical membrane pass occupies residues 19-39; the sequence is VSVGISANSILFFAHLCMLLG. Over 40 to 48 the chain is Cytoplasmic; it reads ENRPKPFHL. Residues 49–69 traverse the membrane as a helical segment; it reads YIVSLSLTQLILLITMGLIAV. Topologically, residues 70-91 are extracellular; sequence DMFMSWGRWDSTPCQSLIYLHR. The cysteines at positions 83 and 170 are disulfide-linked. The helical transmembrane segment at 92-112 threads the bilayer; that stretch reads LLRGFTLCAACLLNVFWMITL. The Cytoplasmic portion of the chain corresponds to 113 to 132; it reads SPRSSCLSKFKHNSPHHISG. Residues 133-153 traverse the membrane as a helical segment; that stretch reads AFLFLCVLYMSFSSHLLVSII. At 154 to 188 the chain is on the extracellular side; the sequence is ATPNLTSNIFMYVTQSCSLLPMSYSRTSTFSTTIA. Asparagine 157 carries N-linked (GlcNAc...) asparagine glycosylation. Residues 189–209 traverse the membrane as a helical segment; sequence IREAFLISLMALSSGFMVTLL. Residues 210–236 are Cytoplasmic-facing; sequence WRHKKQAQHLHSTSLSSKASPERRATR. A helical membrane pass occupies residues 237–257; that stretch reads TILLLMSFFVVLYILENVVFY. Over 258–267 the chain is Extracellular; the sequence is SRMKFKDGSM. A helical membrane pass occupies residues 268 to 288; that stretch reads FYCVQIIVSHSYATISPFVFI. Topologically, residues 289–308 are cytoplasmic; that stretch reads CTEKHMTKILRSVCTRIINI.

It belongs to the G-protein coupled receptor 1 family.

It is found in the cell membrane. Putative pheromone receptor implicated in the regulation of social as well as reproductive behavior. In Rattus norvegicus (Rat), this protein is Vomeronasal type-1 receptor 92 (Vom1r92).